The chain runs to 246 residues: 3'(2'),5'-bisphosphate nucleotidase CysQ (246 aa).

Residues Glu-64, Asp-83, Leu-85, Asp-86, and Asp-205 each contribute to the Mg(2+) site. Residue Glu-64 coordinates substrate. Substrate is bound by residues 85-88 (LDGT) and Asp-205.

Belongs to the inositol monophosphatase superfamily. CysQ family. Requires Mg(2+) as cofactor.

The protein resides in the cell inner membrane. It carries out the reaction adenosine 3',5'-bisphosphate + H2O = AMP + phosphate. Converts adenosine-3',5'-bisphosphate (PAP) to AMP. The polypeptide is 3'(2'),5'-bisphosphate nucleotidase CysQ (Escherichia coli O157:H7).